A 119-amino-acid chain; its full sequence is Large ribosomal subunit protein bL20 (119 aa).

Belongs to the bacterial ribosomal protein bL20 family.

Its function is as follows. Binds directly to 23S ribosomal RNA and is necessary for the in vitro assembly process of the 50S ribosomal subunit. It is not involved in the protein synthesizing functions of that subunit. The polypeptide is Large ribosomal subunit protein bL20 (Clostridium acetobutylicum (strain ATCC 824 / DSM 792 / JCM 1419 / IAM 19013 / LMG 5710 / NBRC 13948 / NRRL B-527 / VKM B-1787 / 2291 / W)).